The following is a 439-amino-acid chain: uncharacterized protein (439 aa).

The DAGKc domain maps to 65 to 208 (TRPKRVFVLV…VYAFELTTEG (144 aa)).

This is an uncharacterized protein from Caenorhabditis elegans.